The following is a 198-amino-acid chain: UPF0312 protein PFL_5802 (198 aa).

Residues M1–A23 form the signal peptide.

It belongs to the UPF0312 family. Type 1 subfamily.

It localises to the periplasm. In Pseudomonas fluorescens (strain ATCC BAA-477 / NRRL B-23932 / Pf-5), this protein is UPF0312 protein PFL_5802.